A 426-amino-acid polypeptide reads, in one-letter code: Glutamate-1-semialdehyde 2,1-aminomutase (426 aa).

K265 carries the N6-(pyridoxal phosphate)lysine modification.

Belongs to the class-III pyridoxal-phosphate-dependent aminotransferase family. HemL subfamily. In terms of assembly, homodimer. The cofactor is pyridoxal 5'-phosphate.

The protein resides in the cytoplasm. The catalysed reaction is (S)-4-amino-5-oxopentanoate = 5-aminolevulinate. It participates in porphyrin-containing compound metabolism; protoporphyrin-IX biosynthesis; 5-aminolevulinate from L-glutamyl-tRNA(Glu): step 2/2. This is Glutamate-1-semialdehyde 2,1-aminomutase from Salmonella heidelberg (strain SL476).